The chain runs to 601 residues: Ubiquitin carboxyl-terminal hydrolase MINDY-2 (601 aa).

The segment at 1 to 205 (MENSPDSPQP…LCKEEEEDPA (205 aa)) is disordered. A compositionally biased stretch (basic and acidic residues) spans 24-34 (EGRRRGGREAE). Thr-62 is subject to Phosphothreonine. Ser-82 bears the Phosphoserine mark. Composition is skewed to low complexity over residues 127–141 (EEPS…SCSE), 148–169 (SPSL…SSEF), and 186–195 (GAAGPPRAAP). The active-site Nucleophile is Cys-244. His-426 (proton acceptor) is an active-site residue. The interval 485 to 537 (GQQDQIDQDYLMALSLQQEQQSQEINWEQIPEGISDLELAKKLQEEEDRRASQ) is ubiquitin-binding domain (UBD). Residues 534–601 (RASQYYQEQE…EKEKNSCVIL (68 aa)) are disordered. Positions 536-570 (SQYYQEQEQAQAVVTTTTPSTQAQQGQPAQASPSS) are enriched in low complexity. Basic and acidic residues predominate over residues 577 to 601 (SERKRKEPREKDKEKEKEKNSCVIL).

Belongs to the MINDY deubiquitinase family. FAM63 subfamily.

It carries out the reaction Thiol-dependent hydrolysis of ester, thioester, amide, peptide and isopeptide bonds formed by the C-terminal Gly of ubiquitin (a 76-residue protein attached to proteins as an intracellular targeting signal).. In terms of biological role, hydrolase that can remove 'Lys-48'-linked conjugated ubiquitin from proteins. Can also bind to polyubiquitin chains of different linkage types, including 'Lys-6', 'Lys-11', 'Lys-29', 'Lys-33' and 'Lys-63'. May play a regulatory role at the level of protein turnover. The sequence is that of Ubiquitin carboxyl-terminal hydrolase MINDY-2 (Mindy2) from Mus musculus (Mouse).